The following is a 376-amino-acid chain: Cell adhesion molecule CEACAM18 (376 aa).

The signal sequence occupies residues 1 to 30 (MDFSRPSFSPWRWLTLVASLLTCGICQASG). The Extracellular portion of the chain corresponds to 31–330 (QIFISPDSLL…PLPTVNRELY (300 aa)). N69, N95, and N110 each carry an N-linked (GlcNAc...) asparagine glycan. In terms of domain architecture, Ig-like C2-type spans 229-314 (PDYVSLWTQP…TQLTFYRDVT (86 aa)). An intrachain disulfide couples C257 to C298. The helical transmembrane segment at 331–351 (IPGPLVIFLILLTSLGGAFVC) threads the bilayer. Over 352–376 (RVLVYSLFQSCSRGKTCHKCPWQTN) the chain is Cytoplasmic.

Belongs to the immunoglobulin superfamily. CEA family. As to expression, mostly expressed in the small and large intestine and at lower levels also in other organs.

It localises to the membrane. The sequence is that of Cell adhesion molecule CEACAM18 from Mus musculus (Mouse).